Here is a 224-residue protein sequence, read N- to C-terminus: Phosphoribosylformylglycinamidine synthase subunit PurQ (224 aa).

The Glutamine amidotransferase type-1 domain occupies R4–S224. C87 (nucleophile) is an active-site residue. Residues H195 and E197 contribute to the active site.

As to quaternary structure, part of the FGAM synthase complex composed of 1 PurL, 1 PurQ and 2 PurS subunits.

It is found in the cytoplasm. It catalyses the reaction N(2)-formyl-N(1)-(5-phospho-beta-D-ribosyl)glycinamide + L-glutamine + ATP + H2O = 2-formamido-N(1)-(5-O-phospho-beta-D-ribosyl)acetamidine + L-glutamate + ADP + phosphate + H(+). It carries out the reaction L-glutamine + H2O = L-glutamate + NH4(+). The protein operates within purine metabolism; IMP biosynthesis via de novo pathway; 5-amino-1-(5-phospho-D-ribosyl)imidazole from N(2)-formyl-N(1)-(5-phospho-D-ribosyl)glycinamide: step 1/2. Part of the phosphoribosylformylglycinamidine synthase complex involved in the purines biosynthetic pathway. Catalyzes the ATP-dependent conversion of formylglycinamide ribonucleotide (FGAR) and glutamine to yield formylglycinamidine ribonucleotide (FGAM) and glutamate. The FGAM synthase complex is composed of three subunits. PurQ produces an ammonia molecule by converting glutamine to glutamate. PurL transfers the ammonia molecule to FGAR to form FGAM in an ATP-dependent manner. PurS interacts with PurQ and PurL and is thought to assist in the transfer of the ammonia molecule from PurQ to PurL. The chain is Phosphoribosylformylglycinamidine synthase subunit PurQ from Mycobacterium leprae (strain TN).